A 1905-amino-acid chain; its full sequence is Low-density lipoprotein receptor-related protein 4 (1905 aa).

An N-terminal signal peptide occupies residues 1–20 (MRRWWGALLLGALLCAHGIA). The Extracellular portion of the chain corresponds to 21–1725 (SSLECACGRS…AAPGEGLHVS (1705 aa)). LDL-receptor class A domains are found at residues 26 to 67 (ACGR…DGCT), 70 to 106 (TCSP…QDCP), 109 to 144 (ECEE…EQCD), 147 to 183 (KCSD…ESCP), 190 to 226 (PCNL…SDCS), 230 to 266 (PCRS…RNCT), 269 to 305 (MCTA…ENCE), and 311 to 350 (QCAS…QNCR). 30 cysteine pairs are disulfide-bonded: C27-C44, C34-C57, C51-C66, C71-C83, C78-C96, C90-C105, C110-C122, C117-C135, C129-C143, C148-C160, C155-C173, C167-C182, C191-C203, C198-C216, C210-C225, C231-C243, C238-C256, C250-C265, C270-C282, C277-C295, C289-C304, C312-C324, C319-C337, C331-C349, C358-C369, C365-C378, C380-C393, C399-C409, C405-C418, and C420-C433. N-linked (GlcNAc...) asparagine glycosylation is present at N264. In terms of domain architecture, EGF-like 1; atypical spans 354–394 (GEENCNVNNGGCAQKCQMVRGAVQCTCHTGYRLTEDGRTCQ). Residues 395–434 (DVNECAEEGYCSQGCTNTEGAFQCWCEAGYELRPDRRSCK) enclose the EGF-like 2; calcium-binding domain. 5 LDL-receptor class B repeats span residues 480 to 522 (ELVF…DWVH), 523 to 565 (DKLY…HPME), 566 to 609 (GTIY…DYAG), 610 to 652 (RRMY…FEDS), and 653 to 693 (LYWT…LHPQ). An N-linked (GlcNAc...) asparagine glycan is attached at N498. The EGF-like 3 domain occupies 698–737 (GKNRCGDNNGGCTHLCLPSGQNYTCACPTGFRKINSHACA). Cystine bridges form between C702–C713, C709–C722, and C724–C736. N-linked (GlcNAc...) asparagine glycosylation is present at N719. 5 LDL-receptor class B repeats span residues 785 to 827 (DHVY…DWVT), 828 to 870 (NKLY…EPMG), 871 to 914 (GYMY…DYGS), 915 to 956 (QRLY…LYGQ), and 957 to 998 (RIYW…FHRQ). A glycan (N-linked (GlcNAc...) asparagine) is linked at N901. N1077 carries N-linked (GlcNAc...) asparagine glycosylation. LDL-receptor class B repeat units follow at residues 1093–1135 (GKVY…DAIG), 1136–1178 (RKVY…YHEM), 1179–1222 (GFMY…DKTS), 1223–1263 (SQLL…LLDS), 1264–1306 (YIYW…DRAQ), 1397–1439 (GKVY…DWVA), 1440–1482 (RNLY…FPRK), 1483–1526 (GYLF…DYDT), 1527–1568 (RRIY…QDRW), and 1569–1610 (IYWT…SPQR). N-linked (GlcNAc...) asparagine glycosylation is found at N1415 and N1467. The interval 1661-1696 (ATSMNEKSPVLPNTLPTTLHSSTTKTRTSLEGAGGR) is disordered. Over residues 1674–1690 (TLPTTLHSSTTKTRTSL) the composition is skewed to low complexity. Residues 1726-1746 (YAIGGLLSILLILLVIAALML) form a helical membrane-spanning segment. The Cytoplasmic portion of the chain corresponds to 1747 to 1905 (YRHRKSKFTD…ERKLSSESQV (159 aa)). A disordered region spans residues 1852 to 1905 (ASSGSLDDTETEQLLQEEQSECSSVHTAATPERRGSLPDTGWKHERKLSSESQV). Residues 1882–1905 (PERRGSLPDTGWKHERKLSSESQV) show a composition bias toward basic and acidic residues.

This sequence belongs to the LDLR family. Homooligomer. Interacts with MUSK; the heterodimer forms an AGRIN receptor complex that binds AGRIN resulting in activation of MUSK. Interacts (via the extracellular domain) with SOST; the interaction facilitates the inhibition of Wnt signaling. Interacts with MESD; the interaction promotes glycosylation of LRP4 and its cell-surface expression. In terms of processing, N-glycosylation is required for cell surface location.

The protein localises to the cell membrane. Functionally, mediates SOST-dependent inhibition of bone formation. Functions as a specific facilitator of SOST-mediated inhibition of Wnt signaling. Plays a key role in the formation and the maintenance of the neuromuscular junction (NMJ), the synapse between motor neuron and skeletal muscle. Directly binds AGRIN and recruits it to the MUSK signaling complex. Mediates the AGRIN-induced phosphorylation of MUSK, the kinase of the complex. The activation of MUSK in myotubes induces the formation of NMJ by regulating different processes including the transcription of specific genes and the clustering of AChR in the postsynaptic membrane. Alternatively, may be involved in the negative regulation of the canonical Wnt signaling pathway, being able to antagonize the LRP6-mediated activation of this pathway. More generally, has been proposed to function as a cell surface endocytic receptor binding and internalizing extracellular ligands for degradation by lysosomes. Plays an essential role in the process of digit differentiation. The chain is Low-density lipoprotein receptor-related protein 4 (Lrp4) from Mus musculus (Mouse).